A 594-amino-acid chain; its full sequence is Aspartate--tRNA(Asp/Asn) ligase (594 aa).

Glu176 contributes to the L-aspartate binding site. Positions 200 to 203 (QIFK) are aspartate. Arg222 provides a ligand contact to L-aspartate. ATP-binding positions include 222-224 (RDE) and Gln231. His450 serves as a coordination point for L-aspartate. Glu484 is a binding site for ATP. Arg491 contacts L-aspartate. 536–539 (GLDR) provides a ligand contact to ATP.

This sequence belongs to the class-II aminoacyl-tRNA synthetase family. Type 1 subfamily. Homodimer.

The protein localises to the cytoplasm. It carries out the reaction tRNA(Asx) + L-aspartate + ATP = L-aspartyl-tRNA(Asx) + AMP + diphosphate. In terms of biological role, aspartyl-tRNA synthetase with relaxed tRNA specificity since it is able to aspartylate not only its cognate tRNA(Asp) but also tRNA(Asn). Reaction proceeds in two steps: L-aspartate is first activated by ATP to form Asp-AMP and then transferred to the acceptor end of tRNA(Asp/Asn). This chain is Aspartate--tRNA(Asp/Asn) ligase, found in Geobacillus sp. (strain WCH70).